Consider the following 102-residue polypeptide: uncharacterized protein (102 aa).

The next 3 helical transmembrane spans lie at 1–21 (MVPL…LRPV), 42–62 (SIID…LILV), and 68–88 (SIHA…FSIV).

It localises to the membrane. This is an uncharacterized protein from Saccharomyces cerevisiae (strain ATCC 204508 / S288c) (Baker's yeast).